The sequence spans 163 residues: Nucleotide-binding protein DET1318 (163 aa).

The protein belongs to the YajQ family.

Nucleotide-binding protein. This is Nucleotide-binding protein DET1318 from Dehalococcoides mccartyi (strain ATCC BAA-2266 / KCTC 15142 / 195) (Dehalococcoides ethenogenes (strain 195)).